Consider the following 1034-residue polypeptide: MINSHHTSQQTLNKESKSQMDKSYNIDDSIVDAKFENYTKKYQDDKLNKILHTYIKNPQILMDEEKEIKERFLAKQMKDVAATKQKFDTKNKLQQLELENENSQNNSYKTSNNLSKEEVIAVLQKQNRKSQVNSVLADNSNIQNDFYPQYRKPKNPTTKKRQSTDYTKRNTFQLENLNIQQQLNNKDSLNQQNQQQQDLAKNRVDNSQNQDIQARLYERTELQKLRIKQKEEEQAALKNKRQTNRSQSIEQNVNFVQNDNQKLIDRHKEYLKQLKQQVTIEKETQKQLKKKDEENKIRLRNSVLASIKNDLTEQRKLIQENHNLFLSKSTVSQSAKQISLPEINQSLTICLEKQKSEVEQEKKAVLTSQAFFRQSSLREIEETNEKIESKTNLSKVKKLRPLPFISSMVEWKKKQRIPADSKIFIVMGGYKDFKKALLKRGWIENPQTNSPCFDLKWTLLGKDIDYDNILPNQIVNHFENNSKICSKIGLLNSLKNLYWFDNADLNCFFPQCFDMNDPDEFNDFVKNFKLSKAVSVLKKYLRLYLEKDEKYNNCKIQAQVALQVLTRYYNDINNVIDDEKQASEYFKSIPDDEWEILASDEMSNEDLAKKKHFEWIKKIKLAYQGIKVKAQVKKKKKKSLAMIKKMISNEAIKRKQDGEKQQIDSSDSEDEEVEMDDFTSAVNQFLNQREKCDPQFNLKGEDNIWIVKPAGLSRGRGITCYKNLVEIIDHAKSMELQMIVQKYIENPVLIKQRKFDIRIWVLVTDWNPLAIWYFDECYVRFSADSYSTKNLSNKFQHLTNNAISKKKAQQGQDEITLQGNMYTQEQLENFFIETEGYNVFQQKIKPQIINIIKWSILSCSDTVESRKNSMELFGYDIMIDTNFNPWLLEVNTSPSLEYSTEITKKLVKQVLEDVAKVVVDYGMAQKSGIKKSELQKIGTGKFIKIYQGLEIQDKGINSIQKNFICEGSKMKIRKPKKQKKNTKLDKKQNLQQDLTINNQINHDQKQFSSQQANNIETYSRPQTAKSQTQSSKKL.

Composition is skewed to polar residues over residues 1–13 (MINSHHTSQQTLN) and 131–146 (QVNSVLADNSNIQNDF). 3 disordered regions span residues 1–21 (MINSHHTSQQTLNKESKSQMD), 131–166 (QVNSVLADNSNIQNDFYPQYRKPKNPTTKKRQSTDY), and 189–208 (LNQQNQQQQDLAKNRVDNSQ). Basic residues predominate over residues 151 to 161 (RKPKNPTTKKR). Low complexity predominate over residues 189 to 199 (LNQQNQQQQDL). Residues 571–930 (DINNVIDDEK…YGMAQKSGIK (360 aa)) enclose the TTL domain. ATP contacts are provided by residues 741-744 (QKYI), Lys754, and Asp756. A disordered region spans residues 1002 to 1034 (HDQKQFSSQQANNIETYSRPQTAKSQTQSSKKL).

Its subcellular location is the cytoplasm. Probable glycylase which modifies tubulin, generating side chains of glycine on the gamma-carboxyl groups of specific glutamate residues within the C-terminal tail of tubulin. In Tetrahymena thermophila (strain SB210), this protein is Tubulin glycylase 3D (TTLL3D).